The chain runs to 373 residues: D-amino-acid oxidase 3 (373 aa).

The first 19 residues, 1–19, serve as a signal peptide directing secretion; sequence MVKYDAVILGSGVLGLSIA. Residues Ser-11, Leu-14, Asp-35, Ala-46, Ser-47, Gly-51, and Asn-53 each contribute to the FAD site. Residue Phe-57 participates in anthranilate binding. N-linked (GlcNAc...) asparagine glycosylation is present at Asn-180. Cys-214 and Cys-271 are disulfide-bonded. Residues Tyr-229, Tyr-246, and Arg-296 each coordinate anthranilate. The (R)-lactate site is built by Tyr-229, Tyr-246, and Arg-296. Arg-296, Gly-342, Gly-345, Tyr-346, and Gln-347 together coordinate FAD. The Microbody targeting signal motif lies at 371–373; sequence AKL.

The protein belongs to the DAMOX/DASOX family. Requires FAD as cofactor.

The protein localises to the peroxisome matrix. It catalyses the reaction a D-alpha-amino acid + O2 + H2O = a 2-oxocarboxylate + H2O2 + NH4(+). In terms of biological role, catalyzes the oxidative deamination of D-amino acids with broad substrate specificity. Enables the organism to utilize D-amino acids as a source of nutrients. Enables the organism to utilize D-glutamate and D-methionine as a nitrogen source. Protects the organism from the toxicity of D-amino acids, including from D-glutamate. May play a role in its interaction with the host. In Cryptococcus neoformans var. grubii serotype A (strain H99 / ATCC 208821 / CBS 10515 / FGSC 9487) (Filobasidiella neoformans var. grubii), this protein is D-amino-acid oxidase 3.